The chain runs to 247 residues: MFKAIVSADTLGAALDSVSVLVDECKVRLDEEGLTIRAVDPANVGMVDLELSASAFESYETDGGVIGVNLDRLEDIVGMADSGQLVHLDLDEETRKLHISLDGLEYTLALIDPDSIRQEPDLPDLDLSSEIVIEGADIDRAVTAADMVSDHIALGVDPDAEEFYVDAEGDTDDVHLELDREDLIDLTPGEARSLFSLDYLKDMNKAIPKDAEVTMELGEEFPVKMHFDFAEGDGHVTYMLAPRIQSD.

This sequence belongs to the PCNA family. As to quaternary structure, homotrimer. The subunits circularize to form a toroid; DNA passes through its center. Replication factor C (RFC) is required to load the toroid on the DNA.

Its function is as follows. Sliding clamp subunit that acts as a moving platform for DNA processing. Responsible for tethering the catalytic subunit of DNA polymerase and other proteins to DNA during high-speed replication. This is DNA polymerase sliding clamp from Natronomonas pharaonis (strain ATCC 35678 / DSM 2160 / CIP 103997 / JCM 8858 / NBRC 14720 / NCIMB 2260 / Gabara) (Halobacterium pharaonis).